A 38-amino-acid chain; its full sequence is Small ribosomal subunit protein eS32 (38 aa).

This sequence belongs to the eukaryotic ribosomal protein eS32 family. As to quaternary structure, component of the small ribosomal subunit (SSU).

This Methanocaldococcus jannaschii (strain ATCC 43067 / DSM 2661 / JAL-1 / JCM 10045 / NBRC 100440) (Methanococcus jannaschii) protein is Small ribosomal subunit protein eS32 (rpl41e).